The following is a 287-amino-acid chain: MFRFQRIGQQLVRRETFLHSPRAKLVQPYLFNSQRQYVIVHKDLQKAKKEPRIRYILYMIALSWAAIFFVSSKVDKKKPMQSMTEREFQEYEKQTGIKRRHKLIHSDQNSKYKFYVIPYIYNNEQIEKIEQSLAKSDPNRKNVVIDPAKLVLEEKEDEGAKYSALLNDLDAMKKPYPPGLITAIIKQHINLLINTREGTFDTNYIIKNYPQTTGEAIKFENDIGDISKCLIMHYDMLNELPQQLPEEKVRNIRNVEGYFDSVNKAQTMVSKFDIMDEKFEEIILEDL.

A mitochondrion-targeting transit peptide spans 1–14 (MFRFQRIGQQLVRR). A helical membrane pass occupies residues 55–72 (YILYMIALSWAAIFFVSS).

Belongs to the AIM36 family.

It is found in the mitochondrion membrane. This is Altered inheritance of mitochondria protein 36, mitochondrial (AIM36) from Lodderomyces elongisporus (strain ATCC 11503 / CBS 2605 / JCM 1781 / NBRC 1676 / NRRL YB-4239) (Yeast).